The chain runs to 79 residues: RNA-binding protein Hfq (79 aa).

The region spanning 10–70 (DAFLNHVRKT…ISTIMPAQPI (61 aa)) is the Sm domain.

It belongs to the Hfq family. As to quaternary structure, homohexamer.

In terms of biological role, RNA chaperone that binds small regulatory RNA (sRNAs) and mRNAs to facilitate mRNA translational regulation in response to envelope stress, environmental stress and changes in metabolite concentrations. Also binds with high specificity to tRNAs. In Ruegeria pomeroyi (strain ATCC 700808 / DSM 15171 / DSS-3) (Silicibacter pomeroyi), this protein is RNA-binding protein Hfq.